Consider the following 1057-residue polypeptide: Probable E3 ubiquitin-protein ligase HERC4 (1057 aa).

7 RCC1 repeats span residues 1-51, 52-101, 102-154, 156-207, 208-259, 261-311, and 313-366; these read MLCW…FVLD, DGTV…ALND, KGQV…ALSK, SEVF…VLTL, SGAI…ALTK, GGVF…AFVP, and SGRI…CVKR. The HECT domain occupies 730–1057; that stretch reads KNIDYKKPLK…IDHNEGFSLI (328 aa). Catalysis depends on Cys1025, which acts as the Glycyl thioester intermediate.

The protein resides in the cytoplasm. It is found in the cytosol. The catalysed reaction is S-ubiquitinyl-[E2 ubiquitin-conjugating enzyme]-L-cysteine + [acceptor protein]-L-lysine = [E2 ubiquitin-conjugating enzyme]-L-cysteine + N(6)-ubiquitinyl-[acceptor protein]-L-lysine.. The protein operates within protein modification; protein ubiquitination. Functionally, probable E3 ubiquitin-protein ligase involved in either protein trafficking or in the distribution of cellular structures. Required for spermatozoon maturation and fertility, and for the removal of the cytoplasmic droplet of the spermatozoon. E3 ubiquitin-protein ligases accept ubiquitin from an E2 ubiquitin-conjugating enzyme in the form of a thioester and then directly transfer it to targeted substrates. The polypeptide is Probable E3 ubiquitin-protein ligase HERC4 (Herc4) (Rattus norvegicus (Rat)).